The sequence spans 433 residues: MEPQLGPEAAALRPGWLALLLWVSALSCSFSLPASSLSSLVPQVRTSYNFGRTFLGLDKCNACIGTSICKKFFKEEIRSDNWLASHLGLPPDSLLSYPANYSDDSKIWRPVEIFRLVSKYQNEISDRRICASASAPKTCSIERVLRKTERFQKWLQAKRLTPDLVQGLASPLLRCPSQRLLDRVVRRYAEVADAGSIFMDHFTDRDKLRLLYTLAVNSHPILLQIFPGAEGWPLPKYLGSCGRFLVSTSTRPLQEFYDAPPDQAADLAYQLLGVLESLRSNDLNYFFYFTHIDAGMFGVFNNGHLFIRDASAVGVIDKQEGSQEANRAGENKDIFSCLVSGCQAQLPSCESISEKQSLVLVCQKLLPRLLQGRFPSPVQDDIDSILVQCGDSIRPDPEVLGAASQLKDILRPLRTCDSRFAYRYPDCKYNDKF.

The first 31 residues, 1-31 (MEPQLGPEAAALRPGWLALLLWVSALSCSFS), serve as a signal peptide directing secretion. The N-linked (GlcNAc...) asparagine glycan is linked to N100.

It belongs to the DIPK family.

Its subcellular location is the secreted. The polypeptide is Divergent protein kinase domain 2B (Homo sapiens (Human)).